We begin with the raw amino-acid sequence, 452 residues long: Mitochondrial distribution and morphology protein 10 (452 aa).

The interval 105–130 is disordered; that stretch reads PLAPESWDSDGPGHEGSDGQEDETTP.

It belongs to the MDM10 family. In terms of assembly, component of the ER-mitochondria encounter structure (ERMES) or MDM complex, composed of MMM1, MDM10, MDM12 and MDM34. Associates with the mitochondrial outer membrane sorting assembly machinery SAM(core) complex.

The protein localises to the mitochondrion outer membrane. Its function is as follows. Component of the ERMES/MDM complex, which serves as a molecular tether to connect the endoplasmic reticulum and mitochondria. Components of this complex are involved in the control of mitochondrial shape and protein biogenesis and may function in phospholipid exchange. MDM10 is involved in the late assembly steps of the general translocase of the mitochondrial outer membrane (TOM complex). Functions in the TOM40-specific route of the assembly of outer membrane beta-barrel proteins, including the association of TOM40 with the receptor TOM22 and small TOM proteins. Can associate with the SAM(core) complex as well as the MDM12-MMM1 complex, both involved in late steps of the major beta-barrel assembly pathway, that is responsible for biogenesis of all outer membrane beta-barrel proteins. May act as a switch that shuttles between both complexes and channels precursor proteins into the TOM40-specific pathway. Plays a role in mitochondrial morphology and in the inheritance of mitochondria. This Uncinocarpus reesii (strain UAMH 1704) protein is Mitochondrial distribution and morphology protein 10.